The primary structure comprises 336 residues: Cytoskeleton protein RodZ (336 aa).

Over 1–111 the chain is Cytoplasmic; it reads MNTEATHDKT…LGKRRKKRDG (111 aa). The region spanning 19–71 is the HTH cro/C1-type domain; it reads LRNAREQLGLSQQAVAERLCLKVSTVRDIEEDKAPADLASTFLRGYIRSYAKL. The segment at residues 30 to 49 is a DNA-binding region (H-T-H motif); the sequence is QQAVAERLCLKVSTVRDIEE. The chain crosses the membrane as a helical; Signal-anchor for type II membrane protein span at residues 112-132; it reads WLMSFTWLVLFVVIGLTGAWW. The Periplasmic portion of the chain corresponds to 133–336; the sequence is WQNHKAQQEE…TVSAEQSAAQ (204 aa). The span at 152-164 shows a compositional bias: low complexity; it reads AALNNSGNNGAQS. The disordered stretch occupies residues 152-235; the sequence is AALNNSGNNG…TTTGNVNVTQ (84 aa). Polar residues-rich tracts occupy residues 165–190 and 200–217; these read VPLN…TVEP and PDQT…QANV. Over residues 220-235 the composition is skewed to low complexity; that stretch reads APAVTPTTTGNVNVTQ.

The protein belongs to the RodZ family.

The protein resides in the cell inner membrane. In terms of biological role, cytoskeletal protein that is involved in cell-shape control through regulation of the length of the long axis. The polypeptide is Cytoskeleton protein RodZ (Enterobacter sp. (strain 638)).